The following is a 761-amino-acid chain: Prolyl endopeptidase FAP (761 aa).

Residues 1 to 4 (MKTW) lie on the Cytoplasmic side of the membrane. A helical; Signal-anchor for type II membrane protein membrane pass occupies residues 5-25 (LKTVFGVTTLAALALVVICIV). The Extracellular segment spans residues 26-761 (LRPSRVYKPE…FLKQCFSLSD (736 aa)). N-linked (GlcNAc...) asparagine glycosylation is found at Asn49, Asn92, and Asn99. Substrate-binding residues include Glu203 and Glu204. Residues Asn227 and Asn314 are each glycosylated (N-linked (GlcNAc...) asparagine). Intrachain disulfides connect Cys321–Cys332, Cys438–Cys441, and Cys448–Cys466. The active-site Charge relay system is the Ser624. A disulfide bridge links Cys643 with Cys756. The N-linked (GlcNAc...) asparagine glycan is linked to Asn679. Residues Asp702 and His734 each act as charge relay system in the active site.

Belongs to the peptidase S9B family. In terms of assembly, homodimer; homodimerization is required for activity of both plasma membrane and soluble forms. The monomer is inactive. Heterodimer with DPP4. Interacts with PLAUR; the interaction occurs at the cell surface of invadopodia membranes. Interacts with ITGB1. Interacts with ITGA3. Associates with integrin alpha-3/beta-1; the association occurs in a collagen-dependent manner at the cell surface of invadopodia membranes. N-glycosylated. In terms of processing, the N-terminus may be blocked. As to expression, expressed strongly in uterus, pancreas, submaxillary gland and skin, less in lymph node, ovary, skeletal muscle, adrenal and bone marrow. Expressed in reactive stromal fibroblast in epithelial cancers. Expressed in melanocytes but not melanomas (at protein level). Detected in fibroblasts, in placenta, uterus, embryos from day 7-19 and in newborn mice (P1).

The protein localises to the cell surface. It localises to the cell membrane. The protein resides in the cell projection. Its subcellular location is the lamellipodium membrane. It is found in the invadopodium membrane. The protein localises to the ruffle membrane. It localises to the membrane. The protein resides in the secreted. It catalyses the reaction Hydrolysis of Pro-|-Xaa &gt;&gt; Ala-|-Xaa in oligopeptides.. It carries out the reaction Release of an N-terminal dipeptide, Xaa-Yaa-|-Zaa-, from a polypeptide, preferentially when Yaa is Pro, provided Zaa is neither Pro nor hydroxyproline.. With respect to regulation, gelatinase activity is inhibited by serine-protease inhibitors, such as phenylmethylsulfonyl fluoride (PMSF), 4-(2-aminoethyl)-benzenesulfonyl fluoride hydrochloride (AEBSF), 4-amidino phenylsulfonyl fluoride (APSF) and diisopropyl fluorophosphate (DFP), N-ethylmaleimide (NEM) and phenylmethylsulfonyl fluoride (PMSF). Dipeptidyl peptidase activity is inhibited by 2,2'-azino-bis(3-ethylbenzthiazoline-6-sulfonic acid), diisopropylfluorophosphate (DFP). Prolyl endopeptidase activity is inhibited by the boronic acid peptide Ac-Gly-BoroPro, Ac-Gly-Pro-chloromethyl ketone and Thr-Ser-Gly-chloromethyl ketone. Functionally, cell surface glycoprotein serine protease that participates in extracellular matrix degradation and involved in many cellular processes including tissue remodeling, fibrosis, wound healing, inflammation and tumor growth. Both plasma membrane and soluble forms exhibit post-proline cleaving endopeptidase activity, with a marked preference for Ala/Ser-Gly-Pro-Ser/Asn/Ala consensus sequences, on substrate such as alpha-2-antiplasmin SERPINF2 and SPRY2. Degrade also gelatin, heat-denatured type I collagen, but not native collagen type I and IV, vibronectin, tenascin, laminin, fibronectin, fibrin or casein. Also has dipeptidyl peptidase activity, exhibiting the ability to hydrolyze the prolyl bond two residues from the N-terminus of synthetic dipeptide substrates provided that the penultimate residue is proline, with a preference for Ala-Pro, Ile-Pro, Gly-Pro, Arg-Pro and Pro-Pro. Natural neuropeptide hormones for dipeptidyl peptidase are the neuropeptide Y (NPY), peptide YY (PYY), substance P (TAC1) and brain natriuretic peptide 32 (NPPB). The plasma membrane form, in association with either DPP4, PLAUR or integrins, is involved in the pericellular proteolysis of the extracellular matrix (ECM), and hence promotes cell adhesion, migration and invasion through the ECM. Plays a role in tissue remodeling during development and wound healing. Participates in the cell invasiveness towards the ECM in malignant melanoma cancers. Enhances tumor growth progression by increasing angiogenesis, collagen fiber degradation and apoptosis and by reducing antitumor response of the immune system. Promotes glioma cell invasion through the brain parenchyma by degrading the proteoglycan brevican. Acts as a tumor suppressor in melanocytic cells through regulation of cell proliferation and survival in a serine protease activity-independent manner. The sequence is that of Prolyl endopeptidase FAP from Mus musculus (Mouse).